We begin with the raw amino-acid sequence, 475 residues long: Ras-GEF domain-containing family member 1B-B (475 aa).

Over residues 1–19 (MPQTTPYSSKFNPSAYSSS) the composition is skewed to polar residues. The interval 1–25 (MPQTTPYSSKFNPSAYSSSHSHRQP) is disordered. The N-terminal Ras-GEF domain maps to 36 to 166 (RDNKLVSGSL…LIQRLLRKLT (131 aa)). Residues 209 to 456 (DPFIFAQQLT…QLASYESEGP (248 aa)) enclose the Ras-GEF domain. A disordered region spans residues 452–475 (ESEGPENNLERDTRRSLRSSLSRM).

Functionally, guanine nucleotide exchange factor (GEF) for Ras family proteins. This Danio rerio (Zebrafish) protein is Ras-GEF domain-containing family member 1B-B.